Here is a 190-residue protein sequence, read N- to C-terminus: Cytoplasmic envelopment protein 3 (190 aa).

Glycine 2 is lipidated: N-myristoyl glycine; by host. A disordered region spans residues 14 to 190 (GTTSGEPLKD…TKKPAASLPF (177 aa)). Over residues 30-43 (SLRSYDNIPPTSSS) the composition is skewed to polar residues. Acidic residues predominate over residues 44–58 (DEGEDDDDGEDDDNE). The span at 80–90 (SHREATHDGPK) shows a compositional bias: basic and acidic residues. Residues 108 to 123 (KQSKKKKKPSKHHHHQ) show a composition bias toward basic residues. A compositionally biased stretch (acidic residues) spans 130–139 (ETDDLDEEDT).

Belongs to the herpesviridae cytoplasmic envelopment protein 3 family. As to quaternary structure, interacts with cytoplasmic envelopment protein 2; this interaction is essential for the proper localization of each protein to the assembly complex and thus for the production of infectious virus. Post-translationally, myristoylation and palmitoylation (probably on one or more of the nearby cysteines at the N-terminus) enable membrane-binding and Golgi apparatus-specific targeting and are essential for efficient packaging. In terms of processing, phosphorylated. Phosphorylation does not seem to be required for recycling to the host Golgi apparatus. Packaging is selective for underphosphorylated forms.

The protein localises to the virion tegument. It localises to the virion membrane. Its subcellular location is the host cell membrane. It is found in the host Golgi apparatus membrane. In terms of biological role, plays an important role in the cytoplasmic envelopment of tegument proteins and capsids during the assembly and egress processes. Also participates in viral entry at the fusion step probably by regulating the core fusion machinery. This is Cytoplasmic envelopment protein 3 (UL99) from Human cytomegalovirus (strain Merlin) (HHV-5).